We begin with the raw amino-acid sequence, 478 residues long: Pathogenicity cluster 5 protein d (478 aa).

The N-terminal stretch at 1-19 (MQIQNLIAALAGMAVVAEA) is a signal peptide. 2 disordered regions span residues 35–89 (RQNK…GQAN) and 299–400 (NGGK…GGKG). Low complexity predominate over residues 38 to 64 (KGGNNNNNNNNNNNNNNNNNKNNGGNN). Polar residues predominate over residues 65–89 (QLCLNPNNVQKGSQQAGTPKQGQAN). Residues 316–326 (NNDGGGGGNDG) show a composition bias toward gly residues. Composition is skewed to low complexity over residues 327-348 (GNNSANNSGSGNKQGGKQQNGA) and 379-393 (TQAGGSASNSATNGN). 2 N-linked (GlcNAc...) asparagine glycosylation sites follow: N328 and N332.

The protein localises to the secreted. Its function is as follows. Secreted protein required for appressorial penetration of intact host epidermal cells and for pathogenicit, but not for subsequent biotrophic and necrotrophic colonization of leaves. This Colletotrichum graminicola (strain M1.001 / M2 / FGSC 10212) (Maize anthracnose fungus) protein is Pathogenicity cluster 5 protein d.